Reading from the N-terminus, the 158-residue chain is MRAPMTSKGAQRLREELDHLKSVKRPAVITAIAEARAHGDLKENAEYHAAREQQSFIEGRIKQLEGELSHAEIIDITKLAAGTKIVFGATVTLADTETDEEKRYQIVGDLEADIKLGLIAISSPLARALIGKLEGDSVTIDAPAGQREYEVVSVAYLD.

Residues 45–72 (AEYHAAREQQSFIEGRIKQLEGELSHAE) adopt a coiled-coil conformation.

The protein belongs to the GreA/GreB family.

Functionally, necessary for efficient RNA polymerase transcription elongation past template-encoded arresting sites. The arresting sites in DNA have the property of trapping a certain fraction of elongating RNA polymerases that pass through, resulting in locked ternary complexes. Cleavage of the nascent transcript by cleavage factors such as GreA or GreB allows the resumption of elongation from the new 3'terminus. GreA releases sequences of 2 to 3 nucleotides. The sequence is that of Transcription elongation factor GreA from Xanthomonas campestris pv. campestris (strain ATCC 33913 / DSM 3586 / NCPPB 528 / LMG 568 / P 25).